Consider the following 89-residue polypeptide: Probable oxaloacetate decarboxylase gamma chain (89 aa).

The helical transmembrane segment at 13 to 33 threads the bilayer; sequence LMLSGMGFVITFLLILIWAIT.

The protein belongs to the OadG family. In terms of assembly, heterotrimer of an alpha, a beta and a gamma subunit. Na(+) is required as a cofactor.

The protein resides in the cell membrane. It carries out the reaction oxaloacetate + 2 Na(+)(in) + H(+) = pyruvate + 2 Na(+)(out) + CO2. Its function is as follows. Catalyzes the decarboxylation of oxaloacetate coupled to Na(+) translocation. This is Probable oxaloacetate decarboxylase gamma chain from Actinobacillus succinogenes (strain ATCC 55618 / DSM 22257 / CCUG 43843 / 130Z).